We begin with the raw amino-acid sequence, 153 residues long: Protein-export protein SecB (153 aa).

This sequence belongs to the SecB family. In terms of assembly, homotetramer, a dimer of dimers. One homotetramer interacts with 1 SecA dimer.

It localises to the cytoplasm. Functionally, one of the proteins required for the normal export of preproteins out of the cell cytoplasm. It is a molecular chaperone that binds to a subset of precursor proteins, maintaining them in a translocation-competent state. It also specifically binds to its receptor SecA. This is Protein-export protein SecB from Erwinia tasmaniensis (strain DSM 17950 / CFBP 7177 / CIP 109463 / NCPPB 4357 / Et1/99).